The following is a 1238-amino-acid chain: DNA-directed RNA polymerase subunit beta (1238 aa).

The segment at 1186–1238 is disordered; it reads IEGREDTPPEEVYEEGYEEGFEEESEELPEDIDFEPDSFDIENDDLDLEDFDI. Positions 1193–1238 are enriched in acidic residues; sequence PPEEVYEEGYEEGFEEESEELPEDIDFEPDSFDIENDDLDLEDFDI.

Belongs to the RNA polymerase beta chain family. As to quaternary structure, the RNAP catalytic core consists of 2 alpha, 1 beta, 1 beta' and 1 omega subunit. When a sigma factor is associated with the core the holoenzyme is formed, which can initiate transcription.

The enzyme catalyses RNA(n) + a ribonucleoside 5'-triphosphate = RNA(n+1) + diphosphate. DNA-dependent RNA polymerase catalyzes the transcription of DNA into RNA using the four ribonucleoside triphosphates as substrates. The protein is DNA-directed RNA polymerase subunit beta of Thermoanaerobacter sp. (strain X514).